Reading from the N-terminus, the 328-residue chain is GATA transcription factor 17 (328 aa).

The segment at 1–68 is disordered; it reads MSGHHEAKPY…EEYEGGEGVP (68 aa). Low complexity predominate over residues 14-29; it reads RGPAPADEEAAPAAAA. Acidic residues-rich tracts occupy residues 30–39 and 47–63; these read DEAEAEAEVE and EQEY…EYEG. In terms of domain architecture, Tify spans 100-135; sequence PHVASNTLTLSFQGEVYVFESVSAERVQAVLLLLGG. Residues 161 to 203 enclose the CCT domain; that stretch reads RMASLMRFREKRKERNFDKKIRYTVRKEVALRMQRNRGQFTSS. Residues 198–231 are disordered; it reads GQFTSSKSKAEEATSVITSSEGSPNWGAVEGRPP. The segment at 236–263 adopts a GATA-type zinc-finger fold; that stretch reads CHHCGISAASTPMMRRGPDGPRTLCNAC.

It belongs to the type IV zinc-finger family. Class C subfamily.

The protein localises to the nucleus. In terms of biological role, transcriptional activator that specifically binds 5'-GATA-3' or 5'-GAT-3' motifs within gene promoters. The sequence is that of GATA transcription factor 17 from Oryza sativa subsp. japonica (Rice).